The chain runs to 180 residues: Ribulose bisphosphate carboxylase small subunit, chloroplastic (180 aa).

The transit peptide at 1–56 (MASSVLSSAAVATRSNVAQANMVAPFTGLKSAASFPVSRKQNLDITSIASNGGRVQ) directs the protein to the chloroplast.

Belongs to the RuBisCO small chain family. Heterohexadecamer of 8 large and 8 small subunits.

It localises to the plastid. The protein localises to the chloroplast. Its function is as follows. RuBisCO catalyzes two reactions: the carboxylation of D-ribulose 1,5-bisphosphate, the primary event in carbon dioxide fixation, as well as the oxidative fragmentation of the pentose substrate. Both reactions occur simultaneously and in competition at the same active site. Although the small subunit is not catalytic it is essential for maximal activity. This is Ribulose bisphosphate carboxylase small subunit, chloroplastic from Nicotiana plumbaginifolia (Leadwort-leaved tobacco).